A 257-amino-acid polypeptide reads, in one-letter code: Thiazole synthase (257 aa).

K96 functions as the Schiff-base intermediate with DXP in the catalytic mechanism. Residues G157, 184-185 (AG), and 206-207 (NT) contribute to the 1-deoxy-D-xylulose 5-phosphate site.

It belongs to the ThiG family. As to quaternary structure, homotetramer. Forms heterodimers with either ThiH or ThiS.

The protein localises to the cytoplasm. The enzyme catalyses [ThiS sulfur-carrier protein]-C-terminal-Gly-aminoethanethioate + 2-iminoacetate + 1-deoxy-D-xylulose 5-phosphate = [ThiS sulfur-carrier protein]-C-terminal Gly-Gly + 2-[(2R,5Z)-2-carboxy-4-methylthiazol-5(2H)-ylidene]ethyl phosphate + 2 H2O + H(+). Its pathway is cofactor biosynthesis; thiamine diphosphate biosynthesis. Its function is as follows. Catalyzes the rearrangement of 1-deoxy-D-xylulose 5-phosphate (DXP) to produce the thiazole phosphate moiety of thiamine. Sulfur is provided by the thiocarboxylate moiety of the carrier protein ThiS. In vitro, sulfur can be provided by H(2)S. In Bartonella henselae (strain ATCC 49882 / DSM 28221 / CCUG 30454 / Houston 1) (Rochalimaea henselae), this protein is Thiazole synthase.